The primary structure comprises 106 residues: MTLEKHAFKMQLNPGMEAEYRRRHDEIWPELVDLLHKSGASDYSIHLDRETNTLFGVLTRPADHTMASLPEHPVVKKWWAYMADIMATNPDNSPVQSDLVTVFHMP.

Substrate is bound at residue Tyr-20. The active-site Proton donor is His-24. Substrate is bound by residues Tyr-43 and 78–79 (WW).

It belongs to the rhamnose mutarotase family. In terms of assembly, homodimer.

It localises to the cytoplasm. It catalyses the reaction alpha-L-rhamnose = beta-L-rhamnose. Its pathway is carbohydrate metabolism; L-rhamnose metabolism. In terms of biological role, involved in the anomeric conversion of L-rhamnose. The sequence is that of L-rhamnose mutarotase from Rhizobium johnstonii (strain DSM 114642 / LMG 32736 / 3841) (Rhizobium leguminosarum bv. viciae).